The primary structure comprises 214 residues: Thymidylate kinase (214 aa).

An ATP-binding site is contributed by G9–S16.

It belongs to the thymidylate kinase family.

The catalysed reaction is dTMP + ATP = dTDP + ADP. Its function is as follows. Phosphorylation of dTMP to form dTDP in both de novo and salvage pathways of dTTP synthesis. This Symbiobacterium thermophilum (strain DSM 24528 / JCM 14929 / IAM 14863 / T) protein is Thymidylate kinase.